We begin with the raw amino-acid sequence, 310 residues long: MSTTAITILGTGVWGSALGTLAQANHHTVTAWSRRGPLTLTQSLAQAQVLVVAISMKGIPDLAAQLQQLKLPTSTIIVSATKGLDPATLRTPSQIWQATFPNNPVLVLSGPNLSKEIEQRLPAATVVAGPNQAAVETVQQLFSSDCFRVYTNPDQLGTELGGTLKNVIAISVGVCEGLKLGTNARAALITRALPEMIRVGTHLGGQAETFFGLSGLGDLLATCTSPLSRNYQVGYQLAQGKSLPEILDQLHGTAEGVNTTNVLVDLANREGIPIPIARQVHRLLKGRITPQEALESLMDRELKPEACDLL.

4 residues coordinate NADPH: Trp-14, Arg-34, Arg-35, and Lys-82. 2 residues coordinate sn-glycerol 3-phosphate: Lys-82 and Gly-110. Ser-114 is a binding site for NADPH. Residues Lys-165, Asp-218, Ser-228, Arg-229, and Asn-230 each coordinate sn-glycerol 3-phosphate. Residue Lys-165 is the Proton acceptor of the active site. Residue Arg-229 coordinates NADPH. Glu-255 serves as a coordination point for NADPH.

The protein belongs to the NAD-dependent glycerol-3-phosphate dehydrogenase family.

It is found in the cytoplasm. The enzyme catalyses sn-glycerol 3-phosphate + NAD(+) = dihydroxyacetone phosphate + NADH + H(+). It carries out the reaction sn-glycerol 3-phosphate + NADP(+) = dihydroxyacetone phosphate + NADPH + H(+). It participates in membrane lipid metabolism; glycerophospholipid metabolism. Its function is as follows. Catalyzes the reduction of the glycolytic intermediate dihydroxyacetone phosphate (DHAP) to sn-glycerol 3-phosphate (G3P), the key precursor for phospholipid synthesis. The chain is Glycerol-3-phosphate dehydrogenase [NAD(P)+] from Acaryochloris marina (strain MBIC 11017).